An 892-amino-acid chain; its full sequence is Alanine--tRNA ligase (892 aa).

4 residues coordinate Zn(2+): His-578, His-582, Cys-681, and His-685.

The protein belongs to the class-II aminoacyl-tRNA synthetase family. It depends on Zn(2+) as a cofactor.

The protein resides in the cytoplasm. The enzyme catalyses tRNA(Ala) + L-alanine + ATP = L-alanyl-tRNA(Ala) + AMP + diphosphate. Catalyzes the attachment of alanine to tRNA(Ala) in a two-step reaction: alanine is first activated by ATP to form Ala-AMP and then transferred to the acceptor end of tRNA(Ala). Also edits incorrectly charged Ser-tRNA(Ala) and Gly-tRNA(Ala) via its editing domain. This chain is Alanine--tRNA ligase, found in Cutibacterium acnes (strain DSM 16379 / KPA171202) (Propionibacterium acnes).